Reading from the N-terminus, the 459-residue chain is Ribulose bisphosphate carboxylase (459 aa).

N111 contributes to the substrate binding site. The active-site Proton acceptor is K166. K168 provides a ligand contact to substrate. Mg(2+) contacts are provided by K191, D193, and E194. At K191 the chain carries N6-carboxylysine. The active-site Proton acceptor is H287. 3 residues coordinate substrate: R288, H321, and S368.

This sequence belongs to the RuBisCO large chain family. Type II subfamily. Homodimer. Mg(2+) serves as cofactor.

The catalysed reaction is 2 (2R)-3-phosphoglycerate + 2 H(+) = D-ribulose 1,5-bisphosphate + CO2 + H2O. The enzyme catalyses D-ribulose 1,5-bisphosphate + O2 = 2-phosphoglycolate + (2R)-3-phosphoglycerate + 2 H(+). Its function is as follows. RuBisCO catalyzes two reactions: the carboxylation of D-ribulose 1,5-bisphosphate, the primary event in carbon dioxide fixation, as well as the oxidative fragmentation of the pentose substrate. Both reactions occur simultaneously and in competition at the same active site. The polypeptide is Ribulose bisphosphate carboxylase (Paramagnetospirillum magnetotacticum (Aquaspirillum magnetotacticum)).